We begin with the raw amino-acid sequence, 216 residues long: Transmembrane protein 186 (216 aa).

The Mitochondrial matrix segment spans residues 1–68 (MAFLLRAVPR…IYRFNAIRAL (68 aa)). Residues 69–91 (GFLSRLKLAQTAVTVVALPPGFY) traverse the membrane as a helical segment. Over 92–103 (CYSQGLMTLSSL) the chain is Mitochondrial intermembrane. A helical membrane pass occupies residues 104–124 (GLMSGIASFALVMLCWMSHFF). Over 125-216 (RRLVGILYVN…GTLATLKNSK (92 aa)) the chain is Mitochondrial matrix.

It belongs to the TMEM186 family. Part of the mitochondrial complex I assembly/MCIA complex that comprises at least the core subunits TMEM126B, NDUFAF1, ECSIT and ACAD9 and complement subunits such as COA1 and TMEM186. Interacts with MT-ND3.

It is found in the mitochondrion inner membrane. In terms of biological role, as part of the MCIA complex, required for efficient assembly of the mitochondrial complex I. In Rattus norvegicus (Rat), this protein is Transmembrane protein 186.